A 289-amino-acid polypeptide reads, in one-letter code: ATP synthase subunit gamma, mitochondrial (289 aa).

Belongs to the ATPase gamma chain family. F-type ATPases have 2 components, CF(1) - the catalytic core - and CF(0) - the membrane proton channel. CF(1) has five subunits: alpha(3), beta(3), gamma(1), delta(1), epsilon(1). CF(0) has three main subunits: a, b and c.

It is found in the mitochondrion. The protein localises to the mitochondrion inner membrane. Mitochondrial membrane ATP synthase (F(1)F(0) ATP synthase or Complex V) produces ATP from ADP in the presence of a proton gradient across the membrane which is generated by electron transport complexes of the respiratory chain. F-type ATPases consist of two structural domains, F(1) - containing the extramembraneous catalytic core, and F(0) - containing the membrane proton channel, linked together by a central stalk and a peripheral stalk. During catalysis, ATP synthesis in the catalytic domain of F(1) is coupled via a rotary mechanism of the central stalk subunits to proton translocation. Part of the complex F(1) domain and the central stalk which is part of the complex rotary element. The gamma subunit protrudes into the catalytic domain formed of alpha(3)beta(3). Rotation of the central stalk against the surrounding alpha(3)beta(3) subunits leads to hydrolysis of ATP in three separate catalytic sites on the beta subunits. The protein is ATP synthase subunit gamma, mitochondrial (ATP3) of Kluyveromyces lactis (strain ATCC 8585 / CBS 2359 / DSM 70799 / NBRC 1267 / NRRL Y-1140 / WM37) (Yeast).